The sequence spans 235 residues: Lipoprotein signal peptidase (235 aa).

The disordered stretch occupies residues 1 to 23 (MTDETSGPAEPVTDAPGDAESPA). 3 helical membrane-spanning segments follow: residues 31-51 (LLLT…VLAV), 84-104 (GYTW…IWMG), and 108-128 (VSPW…GNLV). Residues Asp144 and Asp158 contribute to the active site. Residues 156-176 (VADPSVVGGAILLVALSLFGF) form a helical membrane-spanning segment. The tract at residues 185–235 (RPGEDAEPSAGASDSTPEAPAADGPDKPAGPVGPEDAAEESKTVGHQAEPS) is disordered. Residues 201-218 (PEAPAADGPDKPAGPVGP) are compositionally biased toward low complexity.

This sequence belongs to the peptidase A8 family.

Its subcellular location is the cell membrane. The catalysed reaction is Release of signal peptides from bacterial membrane prolipoproteins. Hydrolyzes -Xaa-Yaa-Zaa-|-(S,diacylglyceryl)Cys-, in which Xaa is hydrophobic (preferably Leu), and Yaa (Ala or Ser) and Zaa (Gly or Ala) have small, neutral side chains.. It functions in the pathway protein modification; lipoprotein biosynthesis (signal peptide cleavage). This protein specifically catalyzes the removal of signal peptides from prolipoproteins. The polypeptide is Lipoprotein signal peptidase (Mycolicibacterium smegmatis (strain ATCC 700084 / mc(2)155) (Mycobacterium smegmatis)).